A 363-amino-acid polypeptide reads, in one-letter code: Chorismate synthase (363 aa).

Residues Arg-48 and Arg-54 each contribute to the NADP(+) site. Residues 125 to 127 (RSS), 237 to 238 (NA), Gly-277, 292 to 296 (KPTSS), and Arg-318 contribute to the FMN site.

It belongs to the chorismate synthase family. As to quaternary structure, homotetramer. The cofactor is FMNH2.

The enzyme catalyses 5-O-(1-carboxyvinyl)-3-phosphoshikimate = chorismate + phosphate. It participates in metabolic intermediate biosynthesis; chorismate biosynthesis; chorismate from D-erythrose 4-phosphate and phosphoenolpyruvate: step 7/7. Its function is as follows. Catalyzes the anti-1,4-elimination of the C-3 phosphate and the C-6 proR hydrogen from 5-enolpyruvylshikimate-3-phosphate (EPSP) to yield chorismate, which is the branch point compound that serves as the starting substrate for the three terminal pathways of aromatic amino acid biosynthesis. This reaction introduces a second double bond into the aromatic ring system. This is Chorismate synthase from Pseudomonas syringae pv. syringae (strain B728a).